Reading from the N-terminus, the 122-residue chain is UPF0344 protein BPUM_1008 (122 aa).

Transmembrane regions (helical) follow at residues 5 to 25, 33 to 53, 60 to 80, and 93 to 113; these read LHITAWVLGIILFFVAFALAG, IVHMIVRLLYLIIIATGVELY, IPGFGGEYIGKMILGILVIGF, and SVTGVLIGFIIFAIVTILLGL.

The protein belongs to the UPF0344 family.

The protein resides in the cell membrane. This chain is UPF0344 protein BPUM_1008, found in Bacillus pumilus (strain SAFR-032).